The primary structure comprises 87 residues: Small ribosomal subunit protein bS20 (87 aa).

The segment at 1-27 (MANSVQATKRARQAEKHRQHNAGMRAA) is disordered. Positions 9–20 (KRARQAEKHRQH) are enriched in basic residues.

It belongs to the bacterial ribosomal protein bS20 family.

Binds directly to 16S ribosomal RNA. This chain is Small ribosomal subunit protein bS20, found in Hydrogenovibrio crunogenus (strain DSM 25203 / XCL-2) (Thiomicrospira crunogena).